The sequence spans 116 residues: uncharacterized protein (116 aa).

The RRM domain occupies 6 to 83; sequence ATVHVGNLAP…RCIRVSPANF (78 aa).

The protein localises to the cytoplasm. Its subcellular location is the nucleus. This is an uncharacterized protein from Schizosaccharomyces pombe (strain 972 / ATCC 24843) (Fission yeast).